The primary structure comprises 190 residues: Hypoxanthine/guanine phosphoribosyltransferase (190 aa).

The protein belongs to the purine/pyrimidine phosphoribosyltransferase family. Archaeal HPRT subfamily. Homodimer.

Its subcellular location is the cytoplasm. It carries out the reaction IMP + diphosphate = hypoxanthine + 5-phospho-alpha-D-ribose 1-diphosphate. It catalyses the reaction GMP + diphosphate = guanine + 5-phospho-alpha-D-ribose 1-diphosphate. The protein operates within purine metabolism; IMP biosynthesis via salvage pathway; IMP from hypoxanthine: step 1/1. Catalyzes a salvage reaction resulting in the formation of IMP that is energically less costly than de novo synthesis. The sequence is that of Hypoxanthine/guanine phosphoribosyltransferase from Methanohalobium evestigatum (strain ATCC BAA-1072 / DSM 3721 / NBRC 107634 / OCM 161 / Z-7303).